A 177-amino-acid chain; its full sequence is Olfactory protein (177 aa).

Residues 1-17 form the signal peptide; it reads MIRIIAIVVLFFLQCQA. Residues cysteine 81 and cysteine 174 are joined by a disulfide bond.

It belongs to the calycin superfamily. Lipocalin family. As to expression, synthesized in Bowman glands, which secrete the mucus that bathes the cilia of the olfactory neuroepithelium.

The protein resides in the secreted. The protein is Olfactory protein of Lithobates pipiens (Northern leopard frog).